The chain runs to 243 residues: 1-(5-phosphoribosyl)-5-[(5-phosphoribosylamino)methylideneamino] imidazole-4-carboxamide isomerase (243 aa).

Residue Asp-8 is the Proton acceptor of the active site. The active-site Proton donor is Asp-130.

Belongs to the HisA/HisF family.

The protein localises to the cytoplasm. It carries out the reaction 1-(5-phospho-beta-D-ribosyl)-5-[(5-phospho-beta-D-ribosylamino)methylideneamino]imidazole-4-carboxamide = 5-[(5-phospho-1-deoxy-D-ribulos-1-ylimino)methylamino]-1-(5-phospho-beta-D-ribosyl)imidazole-4-carboxamide. The protein operates within amino-acid biosynthesis; L-histidine biosynthesis; L-histidine from 5-phospho-alpha-D-ribose 1-diphosphate: step 4/9. This is 1-(5-phosphoribosyl)-5-[(5-phosphoribosylamino)methylideneamino] imidazole-4-carboxamide isomerase from Vesicomyosocius okutanii subsp. Calyptogena okutanii (strain HA).